We begin with the raw amino-acid sequence, 414 residues long: Imidazolonepropionase (414 aa).

2 residues coordinate Fe(3+): His73 and His75. Residues His73 and His75 each contribute to the Zn(2+) site. Positions 82, 145, and 178 each coordinate 4-imidazolone-5-propanoate. Tyr145 is an N-formimidoyl-L-glutamate binding site. His249 is a binding site for Fe(3+). His249 provides a ligand contact to Zn(2+). Gln252 is a 4-imidazolone-5-propanoate binding site. Asp324 provides a ligand contact to Fe(3+). Zn(2+) is bound at residue Asp324. 2 residues coordinate N-formimidoyl-L-glutamate: Asn326 and Gly328. A 4-imidazolone-5-propanoate-binding site is contributed by Ser329.

The protein belongs to the metallo-dependent hydrolases superfamily. HutI family. Requires Zn(2+) as cofactor. Fe(3+) serves as cofactor.

The protein localises to the cytoplasm. It carries out the reaction 4-imidazolone-5-propanoate + H2O = N-formimidoyl-L-glutamate. Its pathway is amino-acid degradation; L-histidine degradation into L-glutamate; N-formimidoyl-L-glutamate from L-histidine: step 3/3. Its function is as follows. Catalyzes the hydrolytic cleavage of the carbon-nitrogen bond in imidazolone-5-propanoate to yield N-formimidoyl-L-glutamate. It is the third step in the universal histidine degradation pathway. The sequence is that of Imidazolonepropionase from Shewanella denitrificans (strain OS217 / ATCC BAA-1090 / DSM 15013).